Consider the following 257-residue polypeptide: Type III pantothenate kinase (257 aa).

7–14 (DIGNSHTV) contributes to the ATP binding site. 106–109 (GTDR) contributes to the substrate binding site. Asp-108 acts as the Proton acceptor in catalysis. Residue Asp-128 participates in K(+) binding. Thr-132 contacts ATP. Substrate is bound at residue Thr-184.

It belongs to the type III pantothenate kinase family. As to quaternary structure, homodimer. It depends on NH4(+) as a cofactor. The cofactor is K(+).

It is found in the cytoplasm. The enzyme catalyses (R)-pantothenate + ATP = (R)-4'-phosphopantothenate + ADP + H(+). It participates in cofactor biosynthesis; coenzyme A biosynthesis; CoA from (R)-pantothenate: step 1/5. Its function is as follows. Catalyzes the phosphorylation of pantothenate (Pan), the first step in CoA biosynthesis. The chain is Type III pantothenate kinase from Nocardioides sp. (strain ATCC BAA-499 / JS614).